A 194-amino-acid chain; its full sequence is ATP-dependent Clp protease proteolytic subunit 1 (194 aa).

Ser-99 acts as the Nucleophile in catalysis. Residue His-124 is part of the active site.

It belongs to the peptidase S14 family. In terms of assembly, fourteen ClpP subunits assemble into 2 heptameric rings which stack back to back to give a disk-like structure with a central cavity, resembling the structure of eukaryotic proteasomes.

The protein localises to the cytoplasm. The catalysed reaction is Hydrolysis of proteins to small peptides in the presence of ATP and magnesium. alpha-casein is the usual test substrate. In the absence of ATP, only oligopeptides shorter than five residues are hydrolyzed (such as succinyl-Leu-Tyr-|-NHMec, and Leu-Tyr-Leu-|-Tyr-Trp, in which cleavage of the -Tyr-|-Leu- and -Tyr-|-Trp bonds also occurs).. Its function is as follows. Cleaves peptides in various proteins in a process that requires ATP hydrolysis. Has a chymotrypsin-like activity. Plays a major role in the degradation of misfolded proteins. In Borreliella burgdorferi (strain ATCC 35210 / DSM 4680 / CIP 102532 / B31) (Borrelia burgdorferi), this protein is ATP-dependent Clp protease proteolytic subunit 1.